Consider the following 70-residue polypeptide: uncharacterized protein (70 aa).

The protein to M.pneumoniae MPN377.

This is an uncharacterized protein from Ureaplasma parvum serovar 3 (strain ATCC 700970).